The primary structure comprises 190 residues: dTTP/UTP pyrophosphatase (190 aa).

Aspartate 71 acts as the Proton acceptor in catalysis.

The protein belongs to the Maf family. YhdE subfamily. The cofactor is a divalent metal cation.

It is found in the cytoplasm. The catalysed reaction is dTTP + H2O = dTMP + diphosphate + H(+). It catalyses the reaction UTP + H2O = UMP + diphosphate + H(+). In terms of biological role, nucleoside triphosphate pyrophosphatase that hydrolyzes dTTP and UTP. May have a dual role in cell division arrest and in preventing the incorporation of modified nucleotides into cellular nucleic acids. In Xanthomonas oryzae pv. oryzae (strain MAFF 311018), this protein is dTTP/UTP pyrophosphatase.